A 300-amino-acid chain; its full sequence is Ribosomal protein L11 methyltransferase (300 aa).

S-adenosyl-L-methionine contacts are provided by Thr-148, Gly-171, Asp-193, and Asn-235.

Belongs to the methyltransferase superfamily. PrmA family.

It is found in the cytoplasm. The enzyme catalyses L-lysyl-[protein] + 3 S-adenosyl-L-methionine = N(6),N(6),N(6)-trimethyl-L-lysyl-[protein] + 3 S-adenosyl-L-homocysteine + 3 H(+). In terms of biological role, methylates ribosomal protein L11. The polypeptide is Ribosomal protein L11 methyltransferase (Desulfotalea psychrophila (strain LSv54 / DSM 12343)).